The sequence spans 326 residues: Beta-ketoacyl-[acyl-carrier-protein] synthase III (326 aa).

Catalysis depends on residues Cys115 and His253. The ACP-binding stretch occupies residues 254–258 (QANKR). Asn283 is a catalytic residue.

It belongs to the thiolase-like superfamily. FabH family. Homodimer.

The protein resides in the cytoplasm. The catalysed reaction is malonyl-[ACP] + acetyl-CoA + H(+) = 3-oxobutanoyl-[ACP] + CO2 + CoA. The protein operates within lipid metabolism; fatty acid biosynthesis. Catalyzes the condensation reaction of fatty acid synthesis by the addition to an acyl acceptor of two carbons from malonyl-ACP. Catalyzes the first condensation reaction which initiates fatty acid synthesis and may therefore play a role in governing the total rate of fatty acid production. Possesses both acetoacetyl-ACP synthase and acetyl transacylase activities. Its substrate specificity determines the biosynthesis of branched-chain and/or straight-chain of fatty acids. In Bradyrhizobium diazoefficiens (strain JCM 10833 / BCRC 13528 / IAM 13628 / NBRC 14792 / USDA 110), this protein is Beta-ketoacyl-[acyl-carrier-protein] synthase III.